The chain runs to 277 residues: Hydroxyethylthiazole kinase (277 aa).

Residue Met55 participates in substrate binding. Arg130 and Ser176 together coordinate ATP. Gly203 contributes to the substrate binding site.

It belongs to the Thz kinase family. The cofactor is Mg(2+).

It carries out the reaction 5-(2-hydroxyethyl)-4-methylthiazole + ATP = 4-methyl-5-(2-phosphooxyethyl)-thiazole + ADP + H(+). It participates in cofactor biosynthesis; thiamine diphosphate biosynthesis; 4-methyl-5-(2-phosphoethyl)-thiazole from 5-(2-hydroxyethyl)-4-methylthiazole: step 1/1. Functionally, catalyzes the phosphorylation of the hydroxyl group of 4-methyl-5-beta-hydroxyethylthiazole (THZ). This is Hydroxyethylthiazole kinase from Cutibacterium acnes (strain DSM 16379 / KPA171202) (Propionibacterium acnes).